The following is a 274-amino-acid chain: 2,3,4,5-tetrahydropyridine-2,6-dicarboxylate N-succinyltransferase (274 aa).

The protein belongs to the transferase hexapeptide repeat family.

The protein localises to the cytoplasm. It carries out the reaction (S)-2,3,4,5-tetrahydrodipicolinate + succinyl-CoA + H2O = (S)-2-succinylamino-6-oxoheptanedioate + CoA. It functions in the pathway amino-acid biosynthesis; L-lysine biosynthesis via DAP pathway; LL-2,6-diaminopimelate from (S)-tetrahydrodipicolinate (succinylase route): step 1/3. In Delftia acidovorans (strain DSM 14801 / SPH-1), this protein is 2,3,4,5-tetrahydropyridine-2,6-dicarboxylate N-succinyltransferase.